The chain runs to 424 residues: Subtilisin-like protease 2 (424 aa).

A signal peptide spans methionine 1–glycine 17. Positions glutamate 18–alanine 123 are excised as a propeptide. An Inhibitor I9 domain is found at glutamine 37–alanine 123. Residues arginine 132–lysine 424 form the Peptidase S8 domain. Active-site charge relay system residues include aspartate 170 and histidine 202. N-linked (GlcNAc...) asparagine glycans are attached at residues asparagine 249, asparagine 262, and asparagine 350. The active-site Charge relay system is the serine 359. N-linked (GlcNAc...) asparagine glycosylation occurs at asparagine 390.

Belongs to the peptidase S8 family.

The protein localises to the secreted. Functionally, secreted subtilisin-like serine protease with keratinolytic activity that contributes to pathogenicity. In Arthroderma otae (Microsporum canis), this protein is Subtilisin-like protease 2 (SUB2).